The following is a 95-amino-acid chain: UPF0473 protein ABC1595 (95 aa).

This sequence belongs to the UPF0473 family.

The protein is UPF0473 protein ABC1595 of Shouchella clausii (strain KSM-K16) (Alkalihalobacillus clausii).